Consider the following 626-residue polypeptide: Two-component response regulator ORR24 (626 aa).

The tract at residues 1-22 (MTVEERQGRVGGHGVSGGGGGR) is disordered. Positions 9 to 22 (RVGGHGVSGGGGGR) are enriched in gly residues. Positions 30–145 (RVLAVDDDPT…QLRTIWQHVI (116 aa)) constitute a Response regulatory domain. Asp-81 is modified (4-aspartylphosphate). The segment covering 151–162 (DAKNRGNDDDAG) has biased composition (basic and acidic residues). 2 disordered regions span residues 151–215 (DAKN…KKPR) and 402–440 (PLESSNQQHLSRVHSSSADPFSTLVGESPQFPDLGRTTN). Residues 191–202 (NGDDGDDSDENS) are compositionally biased toward acidic residues. A DNA-binding region (myb-like GARP) is located at residues 210–269 (TQKKPRVVWSVELHRKFVAAVNQLGIEKAVPKKILDLMNVENITRENVASHLQKYRLYLK). The span at 402 to 421 (PLESSNQQHLSRVHSSSADP) shows a compositional bias: polar residues.

Belongs to the ARR family. Type-B subfamily. Two-component system major event consists of a His-to-Asp phosphorelay between a sensor histidine kinase (HK) and a response regulator (RR). In plants, the His-to-Asp phosphorelay involves an additional intermediate named Histidine-containing phosphotransfer protein (HPt). This multistep phosphorelay consists of a His-Asp-His-Asp sequential transfer of a phosphate group between first a His and an Asp of the HK protein, followed by the transfer to a conserved His of the HPt protein and finally the transfer to an Asp in the receiver domain of the RR protein.

It localises to the nucleus. Its function is as follows. Transcriptional activator that binds specific DNA sequence. Functions as a response regulator involved in His-to-Asp phosphorelay signal transduction system. Phosphorylation of the Asp residue in the receiver domain activates the ability of the protein to promote the transcription of target genes. May directly activate some type-A response regulators in response to cytokinins. The polypeptide is Two-component response regulator ORR24 (Oryza sativa subsp. japonica (Rice)).